We begin with the raw amino-acid sequence, 132 residues long: ER membrane protein complex subunit 5 (132 aa).

Residues 1–3 lie on the Cytoplasmic side of the membrane; the sequence is MAS. A helical membrane pass occupies residues 4 to 22; it reads SIWKGLVGIGLFALAHAAF. Over 23–43 the chain is Lumenal; that stretch reads SAAQHRSYMRLTEKEDETLPI. A helical membrane pass occupies residues 44–63; it reads DIVLQTLLAFIVACYGIVHI. Residues 64-132 are Cytoplasmic-facing; that stretch reads AGEFKDMDAT…KLSKLESMHR (69 aa).

Belongs to the membrane magnesium transporter (TC 1.A.67) family. As to quaternary structure, component of the ER membrane protein complex (EMC).

The protein localises to the endoplasmic reticulum membrane. Its subcellular location is the golgi apparatus membrane. The protein resides in the early endosome membrane. In terms of biological role, part of the endoplasmic reticulum membrane protein complex (EMC) that enables the energy-independent insertion into endoplasmic reticulum membranes of newly synthesized membrane proteins. Preferentially accommodates proteins with transmembrane domains that are weakly hydrophobic or contain destabilizing features such as charged and aromatic residues. Involved in the cotranslational insertion of multi-pass membrane proteins in which stop-transfer membrane-anchor sequences become ER membrane spanning helices. It is also required for the post-translational insertion of tail-anchored/TA proteins in endoplasmic reticulum membranes. By mediating the proper cotranslational insertion of N-terminal transmembrane domains in an N-exo topology, with translocated N-terminus in the lumen of the ER, controls the topology of multi-pass membrane proteins like the G protein-coupled receptors. By regulating the insertion of various proteins in membranes, it is indirectly involved in many cellular processes. May be involved in Mg(2+) transport. This Xenopus tropicalis (Western clawed frog) protein is ER membrane protein complex subunit 5.